Consider the following 533-residue polypeptide: uncharacterized protein (533 aa).

Polar residues-rich tracts occupy residues 30–43 (SQQG…VKNH), 79–91 (NAGT…THLS), 231–247 (NVKS…SSSA), and 254–263 (GRQSNSPNSN). 2 disordered regions span residues 30 to 92 (SQQG…HLSA) and 221 to 274 (SLSP…PGAS). Phosphoserine is present on Ser336. The disordered stretch occupies residues 475–510 (HPSLSNSAASPPVSSPGLRRSHIPVHEGLKHTRDGV). A compositionally biased stretch (low complexity) spans 476 to 490 (PSLSNSAASPPVSSP). Over residues 498–510 (PVHEGLKHTRDGV) the composition is skewed to basic and acidic residues.

The protein localises to the nucleus. This is an uncharacterized protein from Schizosaccharomyces pombe (strain 972 / ATCC 24843) (Fission yeast).